A 178-amino-acid chain; its full sequence is Plasmid transfer protein TraF (178 aa).

The first 30 residues, 1 to 30, serve as a signal peptide directing secretion; it reads MSRILKRIAAGVVIAGVAALLLAAGGYAAG.

The protein belongs to the peptidase S26C family.

The protein localises to the periplasm. Functionally, required for donor-specific phage sensitivity. May be involved in pilus assembly. The sequence is that of Plasmid transfer protein TraF (traF) from Escherichia coli.